The primary structure comprises 334 residues: Ketol-acid reductoisomerase (NADP(+)) (334 aa).

Residues 1–181 (MNIYYDKNAD…GGGRTGILET (181 aa)) enclose the KARI N-terminal Rossmann domain. NADP(+) contacts are provided by residues 24-27 (YGSQ), Arg-47, Ser-50, Ser-52, and 82-85 (DEFQ). Residue His-107 is part of the active site. Gly-133 provides a ligand contact to NADP(+). Residues 182–323 (SFKDETETDL…ESLRSMMPWI (142 aa)) form the KARI C-terminal knotted domain. Mg(2+) is bound by residues Asp-190, Glu-194, Glu-226, and Glu-230. Ser-251 serves as a coordination point for substrate.

This sequence belongs to the ketol-acid reductoisomerase family. It depends on Mg(2+) as a cofactor.

It carries out the reaction (2R)-2,3-dihydroxy-3-methylbutanoate + NADP(+) = (2S)-2-acetolactate + NADPH + H(+). The enzyme catalyses (2R,3R)-2,3-dihydroxy-3-methylpentanoate + NADP(+) = (S)-2-ethyl-2-hydroxy-3-oxobutanoate + NADPH + H(+). It functions in the pathway amino-acid biosynthesis; L-isoleucine biosynthesis; L-isoleucine from 2-oxobutanoate: step 2/4. The protein operates within amino-acid biosynthesis; L-valine biosynthesis; L-valine from pyruvate: step 2/4. Its function is as follows. Involved in the biosynthesis of branched-chain amino acids (BCAA). Catalyzes an alkyl-migration followed by a ketol-acid reduction of (S)-2-acetolactate (S2AL) to yield (R)-2,3-dihydroxy-isovalerate. In the isomerase reaction, S2AL is rearranged via a Mg-dependent methyl migration to produce 3-hydroxy-3-methyl-2-ketobutyrate (HMKB). In the reductase reaction, this 2-ketoacid undergoes a metal-dependent reduction by NADPH to yield (R)-2,3-dihydroxy-isovalerate. In Vesicomyosocius okutanii subsp. Calyptogena okutanii (strain HA), this protein is Ketol-acid reductoisomerase (NADP(+)).